Reading from the N-terminus, the 250-residue chain is Leucyl/phenylalanyl-tRNA--protein transferase (250 aa).

The protein belongs to the L/F-transferase family.

The protein localises to the cytoplasm. The enzyme catalyses N-terminal L-lysyl-[protein] + L-leucyl-tRNA(Leu) = N-terminal L-leucyl-L-lysyl-[protein] + tRNA(Leu) + H(+). It carries out the reaction N-terminal L-arginyl-[protein] + L-leucyl-tRNA(Leu) = N-terminal L-leucyl-L-arginyl-[protein] + tRNA(Leu) + H(+). The catalysed reaction is L-phenylalanyl-tRNA(Phe) + an N-terminal L-alpha-aminoacyl-[protein] = an N-terminal L-phenylalanyl-L-alpha-aminoacyl-[protein] + tRNA(Phe). In terms of biological role, functions in the N-end rule pathway of protein degradation where it conjugates Leu, Phe and, less efficiently, Met from aminoacyl-tRNAs to the N-termini of proteins containing an N-terminal arginine or lysine. The sequence is that of Leucyl/phenylalanyl-tRNA--protein transferase from Cupriavidus necator (strain ATCC 17699 / DSM 428 / KCTC 22496 / NCIMB 10442 / H16 / Stanier 337) (Ralstonia eutropha).